The sequence spans 526 residues: GMP synthase [glutamine-hydrolyzing] (526 aa).

In terms of domain architecture, Glutamine amidotransferase type-1 spans 3–199; that stretch reads KVAIIDFGSQ…FIKIAGCKTD (197 aa). Catalysis depends on Cys83, which acts as the Nucleophile. Residues His174 and Glu176 contribute to the active site. In terms of domain architecture, GMPS ATP-PPase spans 200–392; that stretch reads WTMNSFLDEQ…LGISDEILMR (193 aa). Residue 227-233 coordinates ATP; it reads SGGVDSS.

Homodimer.

The enzyme catalyses XMP + L-glutamine + ATP + H2O = GMP + L-glutamate + AMP + diphosphate + 2 H(+). Its pathway is purine metabolism; GMP biosynthesis; GMP from XMP (L-Gln route): step 1/1. Catalyzes the synthesis of GMP from XMP. In Ehrlichia canis (strain Jake), this protein is GMP synthase [glutamine-hydrolyzing].